The chain runs to 363 residues: Regulator of G-protein signaling rgs-3 (363 aa).

Positions 1-70 (MWRSYKAETP…NSSATSPTPS (70 aa)) are disordered. The segment covering 21–35 (LNLHDSSESDHEGRQ) has biased composition (basic and acidic residues). 2 stretches are compositionally biased toward low complexity: residues 36-50 (SRSA…APAS) and 58-70 (PITN…PTPS). RGS domains lie at 112-225 (NCAN…LEYL) and 240-359 (SFEG…IDLL).

In terms of processing, may be phosphorylated and activated by egl-4.

Functionally, modulates chemotaxis responses by regulating positively the sensitivity to CO2 levels in BAG neurons and by regulating negatively the sensitivity to quinine in ASH sensory neurons. The sequence is that of Regulator of G-protein signaling rgs-3 (rgs-3) from Caenorhabditis elegans.